Reading from the N-terminus, the 1392-residue chain is DNA-directed RNA polymerase subunit beta'' (1392 aa).

Zn(2+) contacts are provided by cysteine 224, cysteine 295, cysteine 302, and cysteine 305.

This sequence belongs to the RNA polymerase beta' chain family. RpoC2 subfamily. In terms of assembly, in plastids the minimal PEP RNA polymerase catalytic core is composed of four subunits: alpha, beta, beta', and beta''. When a (nuclear-encoded) sigma factor is associated with the core the holoenzyme is formed, which can initiate transcription. Zn(2+) serves as cofactor.

It localises to the plastid. The protein resides in the chloroplast. The enzyme catalyses RNA(n) + a ribonucleoside 5'-triphosphate = RNA(n+1) + diphosphate. Its function is as follows. DNA-dependent RNA polymerase catalyzes the transcription of DNA into RNA using the four ribonucleoside triphosphates as substrates. The chain is DNA-directed RNA polymerase subunit beta'' from Eucalyptus globulus subsp. globulus (Tasmanian blue gum).